Reading from the N-terminus, the 168-residue chain is Myosin regulatory light chain 11 (168 aa).

Position 2 is a n,N,N-trimethylalanine (A2). S15 bears the Phosphoserine mark. EF-hand domains lie at 24-59, 94-129, and 130-165; these read TQIQ…MGRL, DPED…QCDR, and FTPE…GEDK. Residues D37, N39, D41, and D48 each coordinate Ca(2+).

Myosin is a hexamer of 2 heavy chains and 4 light chains. The N-terminus is blocked. N,N,N-trimethylalanine, found in other myosin light chains would not have been detected in the N-terminal tryptic peptide in PubMed:7358336 because it would remain trimethylated and ninhydrin negative after hydrolysis.

Its function is as follows. Myosin regulatory subunit that plays an essential to maintain muscle integrity during early development. Plays a role in muscle contraction. This Gallus gallus (Chicken) protein is Myosin regulatory light chain 11 (MYL11).